The primary structure comprises 172 residues: Stellate protein CG33237 (172 aa).

The protein belongs to the casein kinase 2 subunit beta family. In terms of assembly, interacts in vitro with the casein kinase 2 alpha subunit (CkII-alpha). The relevance of such interaction is however unclear in vivo. As to expression, probably not expressed in wild-type flies. In males lacking the Y chromosome, it is testis-specific and constitutes the main component of star-shaped crystals.

Its function is as follows. Unknown. In males lacking the Y chromosome, its strong overexpression leads to the appearance of proteinaceous star-shaped crystals in the primary spermatocytes causing meiotic drive, possibly by interfering with normal casein kinase 2 activity. The protein is Stellate protein CG33237 (Ste:CG33237) of Drosophila melanogaster (Fruit fly).